Reading from the N-terminus, the 300-residue chain is 5'-adenylylsulfate reductase-like 5 (300 aa).

Residues 1 to 23 (MDSRVSILFVCAIAVSCFTSGSA) form the signal peptide. The region spanning 41–161 (FDLEAKCPPS…LIEFYEEATG (121 aa)) is the Thioredoxin domain. N-linked (GlcNAc...) asparagine glycosylation is present at N136. A helical membrane pass occupies residues 202-222 (FLVLSLLFICLQMAILVFPIA).

The protein resides in the membrane. This is 5'-adenylylsulfate reductase-like 5 (APRL5) from Arabidopsis thaliana (Mouse-ear cress).